The sequence spans 686 residues: tRNA 5-methylaminomethyl-2-thiouridine biosynthesis bifunctional protein MnmC (686 aa).

Positions M1–D258 are tRNA (mnm(5)s(2)U34)-methyltransferase. An FAD-dependent cmnm(5)s(2)U34 oxidoreductase region spans residues I276–L686.

In the N-terminal section; belongs to the methyltransferase superfamily. tRNA (mnm(5)s(2)U34)-methyltransferase family. It in the C-terminal section; belongs to the DAO family. Requires FAD as cofactor.

The protein resides in the cytoplasm. The catalysed reaction is 5-aminomethyl-2-thiouridine(34) in tRNA + S-adenosyl-L-methionine = 5-methylaminomethyl-2-thiouridine(34) in tRNA + S-adenosyl-L-homocysteine + H(+). Its function is as follows. Catalyzes the last two steps in the biosynthesis of 5-methylaminomethyl-2-thiouridine (mnm(5)s(2)U) at the wobble position (U34) in tRNA. Catalyzes the FAD-dependent demodification of cmnm(5)s(2)U34 to nm(5)s(2)U34, followed by the transfer of a methyl group from S-adenosyl-L-methionine to nm(5)s(2)U34, to form mnm(5)s(2)U34. The chain is tRNA 5-methylaminomethyl-2-thiouridine biosynthesis bifunctional protein MnmC from Shewanella loihica (strain ATCC BAA-1088 / PV-4).